We begin with the raw amino-acid sequence, 62 residues long: Large ribosomal subunit protein uL29 (62 aa).

Belongs to the universal ribosomal protein uL29 family.

The chain is Large ribosomal subunit protein uL29 from Ruthia magnifica subsp. Calyptogena magnifica.